A 174-amino-acid polypeptide reads, in one-letter code: Ferritin, heavy subunit (174 aa).

Residues 7–156 (QNFHKDCEAA…DWVTNLRRLG (150 aa)) form the Ferritin-like diiron domain. Glu-24, Glu-59, His-62, Glu-104, and Gln-138 together coordinate Fe cation.

Belongs to the ferritin family. In liver, forms a heteromer consisting of middle and heavy subunits. The functional molecule forms a roughly spherical shell with a diameter of 12 nm and contains a central cavity into which the insoluble mineral iron core is deposited. In terms of tissue distribution, liver (at protein level).

It carries out the reaction 4 Fe(2+) + O2 + 4 H(+) = 4 Fe(3+) + 2 H2O. Stores iron in a soluble, non-toxic, readily available form. Important for iron homeostasis. Has ferroxidase activity. Iron is taken up in the ferrous form and deposited as ferric hydroxides after oxidation. Also plays a role in delivery of iron to cells. Mediates iron uptake in capsule cells of the developing kidney. Delivery to lysosomes is mediated by the cargo receptor NCOA4 for autophagic degradation and release of iron. The protein is Ferritin, heavy subunit of Trematomus bernacchii (Emerald rockcod).